The sequence spans 145 residues: MALLCFNSFTTTPVTSSSSLFPHPTANPISRVRIGLPTNCLKGFRILTPIVQKPRKNSIFIASAAAGADSNVADGVEESESKKESDVVSVDKLPLESKLKEREERMLKMKLAKKIRLKRKRLVQKRRLRKKGNWPPSKMKKLEGV.

The N-terminal 63 residues, 1–63 (MALLCFNSFT…PRKNSIFIAS (63 aa)), are a transit peptide targeting the chloroplast. Residues 125-145 (KRRLRKKGNWPPSKMKKLEGV) form a disordered region.

The protein belongs to the chloroplast-specific ribosomal protein cL37 family. As to quaternary structure, part of the 50S ribosomal subunit.

The protein localises to the plastid. It localises to the chloroplast. In Pisum sativum (Garden pea), this protein is Large ribosomal subunit protein cL37 (PSRP5).